A 275-amino-acid chain; its full sequence is Rhamnulose-1-phosphate aldolase (275 aa).

The active site involves Glu-117. Residues His-141, His-143, and His-212 each coordinate Zn(2+).

The protein belongs to the aldolase class II family. RhaD subfamily. Homotetramer. Zn(2+) serves as cofactor.

It is found in the cytoplasm. The catalysed reaction is L-rhamnulose 1-phosphate = (S)-lactaldehyde + dihydroxyacetone phosphate. Its pathway is carbohydrate degradation; L-rhamnose degradation; glycerone phosphate from L-rhamnose: step 3/3. In terms of biological role, catalyzes the reversible cleavage of L-rhamnulose-1-phosphate to dihydroxyacetone phosphate (DHAP) and L-lactaldehyde. This chain is Rhamnulose-1-phosphate aldolase, found in Salmonella heidelberg (strain SL476).